Reading from the N-terminus, the 317-residue chain is Beta-ketoacyl-[acyl-carrier-protein] synthase III (317 aa).

Active-site residues include C112 and H244. An ACP-binding region spans residues 245-249 (QANLR). Residue N274 is part of the active site.

This sequence belongs to the thiolase-like superfamily. FabH family. As to quaternary structure, homodimer.

It localises to the cytoplasm. The catalysed reaction is malonyl-[ACP] + acetyl-CoA + H(+) = 3-oxobutanoyl-[ACP] + CO2 + CoA. It participates in lipid metabolism; fatty acid biosynthesis. Its function is as follows. Catalyzes the condensation reaction of fatty acid synthesis by the addition to an acyl acceptor of two carbons from malonyl-ACP. Catalyzes the first condensation reaction which initiates fatty acid synthesis and may therefore play a role in governing the total rate of fatty acid production. Possesses both acetoacetyl-ACP synthase and acetyl transacylase activities. Its substrate specificity determines the biosynthesis of branched-chain and/or straight-chain of fatty acids. This chain is Beta-ketoacyl-[acyl-carrier-protein] synthase III, found in Pectobacterium atrosepticum (strain SCRI 1043 / ATCC BAA-672) (Erwinia carotovora subsp. atroseptica).